A 204-amino-acid polypeptide reads, in one-letter code: Probable chorismate pyruvate-lyase (204 aa).

Substrate contacts are provided by Arg78, Leu131, and Glu190.

The protein belongs to the UbiC family.

Its subcellular location is the cytoplasm. It carries out the reaction chorismate = 4-hydroxybenzoate + pyruvate. It participates in cofactor biosynthesis; ubiquinone biosynthesis. Its function is as follows. Removes the pyruvyl group from chorismate, with concomitant aromatization of the ring, to provide 4-hydroxybenzoate (4HB) for the ubiquinone pathway. This chain is Probable chorismate pyruvate-lyase, found in Shewanella frigidimarina (strain NCIMB 400).